Consider the following 174-residue polypeptide: Repair DNA polymerase X (174 aa).

The tract at residues 42–51 is involved in ssDNA binding; that stretch reads REEKMLNDVD. Mg(2+)-binding residues include Asp49 and Asp51. A disulfide bond links Cys81 and Cys86. Asp100 is a binding site for Mg(2+).

The protein belongs to the DNA polymerase type-X family. Mg(2+) serves as cofactor.

The protein localises to the virion. The enzyme catalyses DNA(n) + a 2'-deoxyribonucleoside 5'-triphosphate = DNA(n+1) + diphosphate. In terms of biological role, error-prone polymerase lacking a proofreading 3'-5' exonuclease which catalyzes the gap-filling reaction during the DNA repair process. Specifically binds intermediates in the single-nucleotide base-excision repair process. Also catalyzes DNA polymerization with low nucleotide-insertion fidelity. Probably acts as a strategic DNA mutase, which gives rise to a rapid emergence of variants. Generates mismatched G-G pairs, in that case, the polymerase first binds the deoxynucleotide followed by mismatch formation. Together with the viral DNA ligase, fills the single nucleotide gaps generated by the AP endonuclease. Binds DNA with high affinity via the helix alphaE. In Ornithodoros (relapsing fever ticks), this protein is Repair DNA polymerase X.